Consider the following 131-residue polypeptide: DCPSDWSSHEEHCYKVFRLFKTWEEAEKFCTQQVNGWHLASIESVEEANFLAELVPKTLIKSKYHVWIGLRDQSERQQCSSHWTDGSAVSYEKVVRFTKCFGLNKDKGYLEWVTLPCEDKNPFICKSWVPH.

3 disulfides stabilise this stretch: Cys-2/Cys-13, Cys-30/Cys-125, and Cys-100/Cys-117. The 118-residue stretch at 9-126 (HEEHCYKVFR…CEDKNPFICK (118 aa)) folds into the C-type lectin domain.

As to quaternary structure, heterodimer of subunits alpha and beta; disulfide-linked. In terms of tissue distribution, expressed by the venom gland.

Its subcellular location is the secreted. In terms of biological role, interferes with one step of hemostasis (modulation of platelet aggregation, or coagulation cascade, for example). This chain is Snaclec macrovipecetin subunit alpha, found in Macrovipera lebetinus (Levantine viper).